The primary structure comprises 235 residues: Ubiquinone biosynthesis O-methyltransferase (235 aa).

Residues arginine 36, glycine 56, aspartate 77, and methionine 122 each contribute to the S-adenosyl-L-methionine site.

The protein belongs to the methyltransferase superfamily. UbiG/COQ3 family.

It catalyses the reaction a 3-demethylubiquinol + S-adenosyl-L-methionine = a ubiquinol + S-adenosyl-L-homocysteine + H(+). The enzyme catalyses a 3-(all-trans-polyprenyl)benzene-1,2-diol + S-adenosyl-L-methionine = a 2-methoxy-6-(all-trans-polyprenyl)phenol + S-adenosyl-L-homocysteine + H(+). Its pathway is cofactor biosynthesis; ubiquinone biosynthesis. Functionally, O-methyltransferase that catalyzes the 2 O-methylation steps in the ubiquinone biosynthetic pathway. In Leptothrix cholodnii (strain ATCC 51168 / LMG 8142 / SP-6) (Leptothrix discophora (strain SP-6)), this protein is Ubiquinone biosynthesis O-methyltransferase.